The chain runs to 274 residues: ATP synthase subunit a (274 aa).

5 helical membrane-spanning segments follow: residues 43–63 (TLNIDSLFFSVVLGLAFLLVF), 103–123 (VIAPLALTVFVWVLLMNMMDL), 149–169 (DVSITLSMALGVFILIIFYSI), 223–243 (LIFILIAGLLPWWSQWMLSVP), and 245–265 (AIFHILIITLQAFIFMVLTIV).

It belongs to the ATPase A chain family. As to quaternary structure, F-type ATPases have 2 components, CF(1) - the catalytic core - and CF(0) - the membrane proton channel. CF(1) has five subunits: alpha(3), beta(3), gamma(1), delta(1), epsilon(1). CF(0) has three main subunits: a(1), b(2) and c(9-12). The alpha and beta chains form an alternating ring which encloses part of the gamma chain. CF(1) is attached to CF(0) by a central stalk formed by the gamma and epsilon chains, while a peripheral stalk is formed by the delta and b chains.

It is found in the cell inner membrane. Key component of the proton channel; it plays a direct role in the translocation of protons across the membrane. The chain is ATP synthase subunit a from Yersinia pestis bv. Antiqua (strain Antiqua).